We begin with the raw amino-acid sequence, 248 residues long: 4-hydroxy-tetrahydrodipicolinate reductase (248 aa).

Residues aspartate 32, 74-76 (GTT), and 99-102 (SANF) each bind NAD(+). Residue histidine 134 is the Proton donor/acceptor of the active site. Histidine 135 is a (S)-2,3,4,5-tetrahydrodipicolinate binding site. Residue lysine 138 is the Proton donor of the active site. 144–145 (GT) contacts (S)-2,3,4,5-tetrahydrodipicolinate.

It belongs to the DapB family.

The protein resides in the cytoplasm. It carries out the reaction (S)-2,3,4,5-tetrahydrodipicolinate + NAD(+) + H2O = (2S,4S)-4-hydroxy-2,3,4,5-tetrahydrodipicolinate + NADH + H(+). It catalyses the reaction (S)-2,3,4,5-tetrahydrodipicolinate + NADP(+) + H2O = (2S,4S)-4-hydroxy-2,3,4,5-tetrahydrodipicolinate + NADPH + H(+). The protein operates within amino-acid biosynthesis; L-lysine biosynthesis via DAP pathway; (S)-tetrahydrodipicolinate from L-aspartate: step 4/4. In terms of biological role, catalyzes the conversion of 4-hydroxy-tetrahydrodipicolinate (HTPA) to tetrahydrodipicolinate. This Pelodictyon phaeoclathratiforme (strain DSM 5477 / BU-1) protein is 4-hydroxy-tetrahydrodipicolinate reductase.